We begin with the raw amino-acid sequence, 238 residues long: Ribonuclease PH (238 aa).

Residues Arg86 and 124–126 (GTR) each bind phosphate.

This sequence belongs to the RNase PH family. Homohexameric ring arranged as a trimer of dimers.

The enzyme catalyses tRNA(n+1) + phosphate = tRNA(n) + a ribonucleoside 5'-diphosphate. Functionally, phosphorolytic 3'-5' exoribonuclease that plays an important role in tRNA 3'-end maturation. Removes nucleotide residues following the 3'-CCA terminus of tRNAs; can also add nucleotides to the ends of RNA molecules by using nucleoside diphosphates as substrates, but this may not be physiologically important. Probably plays a role in initiation of 16S rRNA degradation (leading to ribosome degradation) during starvation. In Nitrosospira multiformis (strain ATCC 25196 / NCIMB 11849 / C 71), this protein is Ribonuclease PH.